The primary structure comprises 259 residues: MFHEIHRCQHADAPLLVLSSGLGGSSRYWADDLAALTRDHDVLVYDHAGTGRSPADLPADYSIRHMAMELLTLLDSLGIQRCHFMGHALGGLVGLEIALLRPELLQSQVLINAWSSPNPHSARCFSVRKKLLLNSGPDAYVQAQALFLYPADWIAANGARLADDEAHALAHFPGTDNLLRRIHALQTFDVEASLARIQTPTLLIANRDDMLVPWQQSQHLAEALPNARLVLLEYGGHASNITDPLPFQRTLLDFLNAQT.

It belongs to the AB hydrolase superfamily. Hydrolase RutD family.

The enzyme catalyses carbamate + 2 H(+) = NH4(+) + CO2. In terms of biological role, involved in pyrimidine catabolism. May facilitate the hydrolysis of carbamate, a reaction that can also occur spontaneously. The protein is Putative carbamate hydrolase RutD of Pseudomonas savastanoi pv. phaseolicola (strain 1448A / Race 6) (Pseudomonas syringae pv. phaseolicola (strain 1448A / Race 6)).